The following is a 558-amino-acid chain: Ankyrin repeat protein OPG189 (558 aa).

ANK repeat units follow at residues 65–95, 169–205, 209–239, 243–272, 276–304, 339–368, and 372–401; these read YGEN…NINK, YGCT…DVDK, YGNT…NIDS, NRYT…NVNA, FGTT…ELEI, YNET…DFET, and SGCT…SLKI.

It belongs to the orthopoxvirus OPG189 protein family.

Contributes to viral release without involving rearrangement of host actin. This chain is Ankyrin repeat protein OPG189 (OPG189), found in Homo sapiens (Human).